The chain runs to 331 residues: Isopenicillin N synthase (331 aa).

Residues R87, Y91, S183, and Y189 each coordinate isopenicillin N. N-[(5S)-5-amino-5-carboxypentanoyl]-L-cysteinyl-D-valine-binding residues include R87, Y91, S183, Y189, H214, and D216. A Fe2OG dioxygenase domain is found at 176–288 (KKEDALSSVV…RQSLPFFVNL (113 aa)). Fe(2+)-binding residues include H214, D216, and H270. R279 lines the 2-oxoglutarate pocket. Residue S281 coordinates isopenicillin N. S281 lines the N-[(5S)-5-amino-5-carboxypentanoyl]-L-cysteinyl-D-valine pocket.

It belongs to the iron/ascorbate-dependent oxidoreductase family. In terms of assembly, monomer. Fe(2+) is required as a cofactor.

It localises to the cytoplasm. The protein resides in the cytosol. It catalyses the reaction N-[(5S)-5-amino-5-carboxypentanoyl]-L-cysteinyl-D-valine + O2 = isopenicillin N + 2 H2O. It participates in antibiotic biosynthesis; penicillin G biosynthesis; penicillin G from L-alpha-aminoadipate and L-cysteine and L-valine: step 2/3. Its function is as follows. Isopenicillin N synthase; part of the gene cluster that mediates the biosynthesis of penicillin, the world's most important antibiotic. IpnA catalyzes the cyclization of the tripeptide N-[(5S)-5-amino-5-carboxypentanoyl]-L-cysteinyl-D-valine (LLD-ACV or ACV) to form isopenicillin N (IPN) that contains the beta-lactam nucleus. The penicillin biosynthesis occurs via 3 enzymatic steps, the first corresponding to the production of the tripeptide N-[(5S)-5-amino-5-carboxypentanoyl]-L-cysteinyl-D-valine (LLD-ACV or ACV) by the NRPS acvA. The tripeptide ACV is then cyclized to isopenicillin N (IPN) by the isopenicillin N synthase ipnA that forms the beta-lactam nucleus. Finally, the alpha-aminoadipyl side chain is exchanged for phenylacetic acid by the isopenicillin N acyltransferase aatA to yield penicillin in the peroxisomal matrix. This Penicillium chrysogenum (Penicillium notatum) protein is Isopenicillin N synthase.